Consider the following 160-residue polypeptide: Large ribosomal subunit protein uL22c (160 aa).

The protein belongs to the universal ribosomal protein uL22 family. As to quaternary structure, part of the 50S ribosomal subunit.

It localises to the plastid. The protein resides in the chloroplast. Functionally, this protein binds specifically to 23S rRNA. Its function is as follows. The globular domain of the protein is located near the polypeptide exit tunnel on the outside of the subunit, while an extended beta-hairpin is found that lines the wall of the exit tunnel in the center of the 70S ribosome. The polypeptide is Large ribosomal subunit protein uL22c (rpl22) (Eucalyptus globulus subsp. globulus (Tasmanian blue gum)).